The sequence spans 330 residues: Anthranilate phosphoribosyltransferase (330 aa).

5-phospho-alpha-D-ribose 1-diphosphate-binding positions include Gly-77, 80-81 (GD), Thr-85, 87-90 (NIST), 105-113 (KHGNKAVSS), and Ser-117. An anthranilate-binding site is contributed by Gly-77. Ser-89 is a binding site for Mg(2+). Asn-108 provides a ligand contact to anthranilate. Arg-163 contacts anthranilate. Mg(2+) is bound by residues Asp-222 and Glu-223.

The protein belongs to the anthranilate phosphoribosyltransferase family. As to quaternary structure, homodimer. Mg(2+) is required as a cofactor.

The enzyme catalyses N-(5-phospho-beta-D-ribosyl)anthranilate + diphosphate = 5-phospho-alpha-D-ribose 1-diphosphate + anthranilate. It functions in the pathway amino-acid biosynthesis; L-tryptophan biosynthesis; L-tryptophan from chorismate: step 2/5. Its function is as follows. Catalyzes the transfer of the phosphoribosyl group of 5-phosphorylribose-1-pyrophosphate (PRPP) to anthranilate to yield N-(5'-phosphoribosyl)-anthranilate (PRA). The chain is Anthranilate phosphoribosyltransferase from Pelagibacter ubique (strain HTCC1062).